A 314-amino-acid chain; its full sequence is Quinolinate synthase (314 aa).

Residues H27 and S44 each contribute to the iminosuccinate site. C89 lines the [4Fe-4S] cluster pocket. Iminosuccinate-binding positions include 115 to 117 (YIN) and S132. [4Fe-4S] cluster is bound at residue C175. Iminosuccinate is bound by residues 201–203 (HPE) and T218. C271 provides a ligand contact to [4Fe-4S] cluster.

Belongs to the quinolinate synthase family. Type 2 subfamily. It depends on [4Fe-4S] cluster as a cofactor.

The protein resides in the cytoplasm. The catalysed reaction is iminosuccinate + dihydroxyacetone phosphate = quinolinate + phosphate + 2 H2O + H(+). The protein operates within cofactor biosynthesis; NAD(+) biosynthesis; quinolinate from iminoaspartate: step 1/1. In terms of biological role, catalyzes the condensation of iminoaspartate with dihydroxyacetone phosphate to form quinolinate. The polypeptide is Quinolinate synthase (Ehrlichia chaffeensis (strain ATCC CRL-10679 / Arkansas)).